Consider the following 619-residue polypeptide: Chaperone protein HscA homolog (619 aa).

It belongs to the heat shock protein 70 family.

Functionally, chaperone involved in the maturation of iron-sulfur cluster-containing proteins. Has a low intrinsic ATPase activity which is markedly stimulated by HscB. This is Chaperone protein HscA homolog from Acinetobacter baumannii (strain AB0057).